The primary structure comprises 244 residues: DNA repair protein RecO (244 aa).

This sequence belongs to the RecO family.

Functionally, involved in DNA repair and RecF pathway recombination. This is DNA repair protein RecO from Myxococcus xanthus (strain DK1622).